Here is a 226-residue protein sequence, read N- to C-terminus: 7-cyano-7-deazaguanine synthase (226 aa).

An ATP-binding site is contributed by 10-20; sequence LSGGLDSATAA. Zn(2+)-binding residues include Cys-191, Cys-199, Cys-202, and Cys-205.

This sequence belongs to the QueC family. Zn(2+) is required as a cofactor.

It catalyses the reaction 7-carboxy-7-deazaguanine + NH4(+) + ATP = 7-cyano-7-deazaguanine + ADP + phosphate + H2O + H(+). The protein operates within purine metabolism; 7-cyano-7-deazaguanine biosynthesis. Catalyzes the ATP-dependent conversion of 7-carboxy-7-deazaguanine (CDG) to 7-cyano-7-deazaguanine (preQ(0)). The sequence is that of 7-cyano-7-deazaguanine synthase from Parasynechococcus marenigrum (strain WH8102).